A 228-amino-acid chain; its full sequence is SKA complex subunit 2 (228 aa).

This sequence belongs to the SKA2 family. Component of the SKA complex, composed of ska1, ska2 and ska3.

The protein resides in the cytoplasm. Its subcellular location is the cytoskeleton. It localises to the spindle. It is found in the chromosome. The protein localises to the centromere. The protein resides in the kinetochore. In terms of biological role, component of the SKA complex, a microtubule plus end-binding complex of the outer kinetochore that stabilizes spindle microtubule-kinetochore attachments, promotes alignment of chromosomes at the mitotic spindle equator (chromosome congression) and assists suppression of the spindle assembly checkpoint. Kinetochores, consisting of a centromere-associated inner segment and a microtubule-contacting outer segment, play a crucial role in chromosome segregation by mediating the physical connection between centromeric DNA and spindle microtubules. The outer kinetochore is made up of the ten-subunit KMN network complex, comprising the MIS12, NDC80 and KNL1 complexes, and auxiliary microtubule-associated components such as the SKA complex; together they connect the outer kinetochore with the inner kinetochore, bind microtubules, and mediate interactions with mitotic checkpoint proteins that delay anaphase until chromosomes are bioriented on the spindle. The SKA complex is loaded onto bioriented kinetochores and it facilitates chromosome congression by stabilizing microtubules together with MAPRE1, and end-on attachment of the NDC80 complex to depolymerizing spindle microtubules, thereby assisting the poleward-moving kinetochore in withstanding microtubule pulling forces. The complex associates with dynamic microtubule plus-ends and can track both depolymerizing and elongating microtubules. The complex recruits protein phosphatase 1 (PP1) to the kinetochore in prometaphase and metaphase, to oppose spindle assembly checkpoint signaling and promote the onset of anaphase. Binds directly to microtubules; but with a much lower affinity than SKA1. During meiosis the SKA complex stabilizes the meiotic spindle and is required for its migration to the cortex. In Salmo salar (Atlantic salmon), this protein is SKA complex subunit 2 (ska2).